The following is a 170-amino-acid chain: Aspartate 1-decarboxylase (170 aa).

S25 functions as the Schiff-base intermediate with substrate; via pyruvic acid in the catalytic mechanism. S25 is subject to Pyruvic acid (Ser). T57 contributes to the substrate binding site. The Proton donor role is filled by Y58. 73 to 75 (GAA) serves as a coordination point for substrate. The interval 118 to 170 (GHDPAEALPDDPSSLRGDLAVPGNPVTAAARRGTPTHQAPVALPASRTVVAPR) is disordered.

It belongs to the PanD family. In terms of assembly, heterooctamer of four alpha and four beta subunits. It depends on pyruvate as a cofactor. In terms of processing, is synthesized initially as an inactive proenzyme, which is activated by self-cleavage at a specific serine bond to produce a beta-subunit with a hydroxyl group at its C-terminus and an alpha-subunit with a pyruvoyl group at its N-terminus.

The protein resides in the cytoplasm. The enzyme catalyses L-aspartate + H(+) = beta-alanine + CO2. Its pathway is cofactor biosynthesis; (R)-pantothenate biosynthesis; beta-alanine from L-aspartate: step 1/1. Functionally, catalyzes the pyruvoyl-dependent decarboxylation of aspartate to produce beta-alanine. This chain is Aspartate 1-decarboxylase, found in Frankia alni (strain DSM 45986 / CECT 9034 / ACN14a).